Reading from the N-terminus, the 729-residue chain is Fatty acid oxidation complex subunit alpha (729 aa).

An enoyl-CoA hydratase/isomerase region spans residues 1 to 189; it reads MLYKGDTLYV…KIGLIDGIVK (189 aa). Asp296 serves as a coordination point for substrate. Residues 311–729 form a 3-hydroxyacyl-CoA dehydrogenase region; that stretch reads EMPKQAAVLG…ARPVGALKTA (419 aa). Residues Met324, Asp343, 400–402, Lys407, and Ser429 contribute to the NAD(+) site; that span reads VVE. Residue His450 is the For 3-hydroxyacyl-CoA dehydrogenase activity of the active site. NAD(+) is bound at residue Asn453. The substrate site is built by Asn500 and Tyr660. A disordered region spans residues 708–729; it reads RHNEPYYPPVEPARPVGALKTA.

The protein in the N-terminal section; belongs to the enoyl-CoA hydratase/isomerase family. In the C-terminal section; belongs to the 3-hydroxyacyl-CoA dehydrogenase family. As to quaternary structure, heterotetramer of two alpha chains (FadB) and two beta chains (FadA).

It carries out the reaction a (3S)-3-hydroxyacyl-CoA + NAD(+) = a 3-oxoacyl-CoA + NADH + H(+). The catalysed reaction is a (3S)-3-hydroxyacyl-CoA = a (2E)-enoyl-CoA + H2O. It catalyses the reaction a 4-saturated-(3S)-3-hydroxyacyl-CoA = a (3E)-enoyl-CoA + H2O. The enzyme catalyses (3S)-3-hydroxybutanoyl-CoA = (3R)-3-hydroxybutanoyl-CoA. It carries out the reaction a (3Z)-enoyl-CoA = a 4-saturated (2E)-enoyl-CoA. The catalysed reaction is a (3E)-enoyl-CoA = a 4-saturated (2E)-enoyl-CoA. Its pathway is lipid metabolism; fatty acid beta-oxidation. Functionally, involved in the aerobic and anaerobic degradation of long-chain fatty acids via beta-oxidation cycle. Catalyzes the formation of 3-oxoacyl-CoA from enoyl-CoA via L-3-hydroxyacyl-CoA. It can also use D-3-hydroxyacyl-CoA and cis-3-enoyl-CoA as substrate. The protein is Fatty acid oxidation complex subunit alpha of Enterobacter sp. (strain 638).